Here is a 567-residue protein sequence, read N- to C-terminus: Phenylalanine--tRNA ligase beta subunit (567 aa).

The region spanning 284–359 (FAVRTKHVSH…RAYDFNDLTP (76 aa)) is the B5 domain. Positions 337, 343, 346, and 347 each coordinate Mg(2+).

Belongs to the phenylalanyl-tRNA synthetase beta subunit family. Type 2 subfamily. In terms of assembly, tetramer of two alpha and two beta subunits. Requires Mg(2+) as cofactor.

It is found in the cytoplasm. The catalysed reaction is tRNA(Phe) + L-phenylalanine + ATP = L-phenylalanyl-tRNA(Phe) + AMP + diphosphate + H(+). The chain is Phenylalanine--tRNA ligase beta subunit from Halobacterium salinarum (strain ATCC 29341 / DSM 671 / R1).